Consider the following 550-residue polypeptide: Spermatogenesis-associated protein 2 (550 aa).

The region spanning 83–156 is the PUB domain; sequence TVGTAFATLE…YNVRDHPGGA (74 aa). Residues 320 to 337 carry the PIM motif motif; the sequence is YHLSSLDEVDLYTERGLG. Residues 457–480 form a disordered region; it reads SKPVGSGPSPVGSLVSSGSSSSGG.

This sequence belongs to the SPATA2 family.

The protein localises to the cytoplasm. It localises to the nucleus. Functionally, bridging factor that mediates the recruitment of cyld to the LUBAC complex, thereby regulating TNF-alpha-induced necroptosis. Required to activate the 'Met-1'- (linear) and 'Lys-63'-linked deubiquitinase activities of cyld. This chain is Spermatogenesis-associated protein 2, found in Danio rerio (Zebrafish).